We begin with the raw amino-acid sequence, 1295 residues long: DNA (cytosine-5)-methyltransferase CMT2 (1295 aa).

3 disordered regions span residues 1–23, 61–91, and 249–287; these read MLSP…SSSR, RRST…GKSQ, and NSSK…GKGM. Positions 61 to 72 are enriched in polar residues; it reads RRSTTLNCNSPE. A BAH domain is found at 578-693; it reads HTFSLGDFAY…VEYSTFQTLR (116 aa). The region spanning 727 to 1268 is the SAM-dependent MTase C5-type domain; that stretch reads LPVLDLYSGC…YSLGMAFRGL (542 aa). The disordered stretch occupies residues 814–835; it reads SVNSTKETSGSSSSSDDDSDSE. In terms of domain architecture, Chromo spans 837-902; it reads YEVEKLVDIC…SGFKSKILPL (66 aa). Cys915 is a catalytic residue.

Belongs to the class I-like SAM-binding methyltransferase superfamily. C5-methyltransferase family.

Its subcellular location is the nucleus. It catalyses the reaction a 2'-deoxycytidine in DNA + S-adenosyl-L-methionine = a 5-methyl-2'-deoxycytidine in DNA + S-adenosyl-L-homocysteine + H(+). May be involved in the CpXpG methylation and in gene silencing. This chain is DNA (cytosine-5)-methyltransferase CMT2 (CMT2), found in Arabidopsis thaliana (Mouse-ear cress).